The sequence spans 606 residues: Threonine--tRNA ligase (606 aa).

Residues 212 to 503 (DHRKLGVEMK…LLEHTAGELP (292 aa)) form a catalytic region. The Zn(2+) site is built by Cys304, His355, and His480.

This sequence belongs to the class-II aminoacyl-tRNA synthetase family. As to quaternary structure, homodimer. It depends on Zn(2+) as a cofactor.

The protein localises to the cytoplasm. It carries out the reaction tRNA(Thr) + L-threonine + ATP = L-threonyl-tRNA(Thr) + AMP + diphosphate + H(+). Catalyzes the attachment of threonine to tRNA(Thr) in a two-step reaction: L-threonine is first activated by ATP to form Thr-AMP and then transferred to the acceptor end of tRNA(Thr). Also edits incorrectly charged L-seryl-tRNA(Thr). The chain is Threonine--tRNA ligase from Campylobacter concisus (strain 13826).